A 41-amino-acid chain; its full sequence is Large ribosomal subunit protein bL36 (41 aa).

The protein belongs to the bacterial ribosomal protein bL36 family.

The polypeptide is Large ribosomal subunit protein bL36 (Stenotrophomonas maltophilia (strain R551-3)).